The following is a 610-amino-acid chain: Protein Smaug homolog 1 (610 aa).

Serine 67 bears the Phosphoserine mark. Disordered regions lie at residues 177-222, 318-366, and 464-487; these read ARGP…EEGS, SSPS…LQPP, and NRGF…GRRN. Residues 222-295 enclose the SAM domain; it reads SGMKDVPAWL…LKSLERDIIE (74 aa). The residue at position 319 (serine 319) is a Phosphoserine. Threonine 323 bears the Phosphothreonine mark. Residues 344–358 are compositionally biased toward low complexity; the sequence is SAATVTSATASASAG. An Omega-N-methylarginine modification is found at arginine 465. A compositionally biased stretch (polar residues) spans 467-480; that stretch reads FGQSNSLPTASSVG. Residue serine 472 is modified to Phosphoserine.

Belongs to the SMAUG family. Expressed in brain (at protein level).

The protein resides in the cytoplasm. Its subcellular location is the cell projection. It localises to the dendrite. It is found in the synapse. The protein localises to the synaptosome. In terms of biological role, acts as a translational repressor of SRE-containing messengers. This is Protein Smaug homolog 1 (Samd4a) from Rattus norvegicus (Rat).